Reading from the N-terminus, the 501-residue chain is Probable cytochrome P450 28d2 (501 aa).

Cys-446 contributes to the heme binding site.

This sequence belongs to the cytochrome P450 family. Requires heme as cofactor.

It is found in the endoplasmic reticulum membrane. The protein localises to the microsome membrane. In terms of biological role, may be involved in the metabolism of insect hormones and in the breakdown of synthetic insecticides. This Drosophila melanogaster (Fruit fly) protein is Probable cytochrome P450 28d2 (Cyp28d2).